The chain runs to 563 residues: Src substrate protein p85 (563 aa).

Cortactin repeat units lie at residues 89 to 125 (ASHG…SQVD), 126 to 162 (SVKG…SQKD), 163 to 199 (YSSG…SQKD), 200 to 236 (YSKG…SQKD), 237 to 273 (YVKG…SQKD), and 274 to 310 (YKSG…SQQD). Residues 311 to 333 (YSKGFGGKYGVQKDRMDKNAATF) form a Cortactin 7; truncated repeat. Residues 331 to 477 (ATFEDIEKPT…EAVSQREAEY (147 aa)) are disordered. The stretch at 349 to 410 (VERVANKTSS…EEQAKAKKQT (62 aa)) forms a coiled coil. The span at 366–405 (LAKEKEQEDRRKAEAERAQRMAREKQEQEEARRKLEEQAK) shows a compositional bias: basic and acidic residues. The 59-residue stretch at 505–563 (ELGITAIALYDYQAAGDDEISFDPDDIITNIEMIDDGWWRGVCKGRYGLFPANYVELRQ) folds into the SH3 domain.

Acetylated. In terms of processing, in normal cells, appears to be phosphorylated on serine and threonine; in cells expressing activated forms of pp60-src, they become heavily phosphorylated on tyrosine in vitro. Tyrosine phosphorylation in transformed cells may contribute to cellular growth regulation and transformation.

It is found in the cytoplasm. It localises to the cytoskeleton. The protein localises to the cell projection. The protein resides in the lamellipodium. Its subcellular location is the ruffle. It is found in the dendrite. It localises to the cell membrane. The protein localises to the podosome. The protein resides in the cell junction. Its subcellular location is the focal adhesion. It is found in the membrane. It localises to the clathrin-coated pit. The protein localises to the dendritic spine. The protein resides in the cell cortex. Its subcellular location is the endoplasmic reticulum. Its function is as follows. Contributes to the organization of the actin cytoskeleton and cell shape. Plays a role in the formation of lamellipodia and in cell migration. Plays a role in the regulation of neuron morphology, axon growth and formation of neuronal growth cones, and may play a role in the regulation of neuronal spine density. Plays a role in focal adhesion assembly and turnover. Plays a role in intracellular protein transport and endocytosis, and in modulating the levels of potassium channels present at the cell membrane. Plays a role in endocytosis via clathrin-coated pits. In Gallus gallus (Chicken), this protein is Src substrate protein p85 (CTTN1).